A 330-amino-acid polypeptide reads, in one-letter code: Ribosome production factor 1 (330 aa).

Disordered regions lie at residues 1-32 (MKAV…FPPT) and 53-83 (EEKR…KEVP). The segment covering 55–70 (KRKKRMELKKKKKKER) has biased composition (basic residues). Residues 71–83 (KALDDKAPPKEVP) are compositionally biased toward basic and acidic residues. The Brix domain maps to 123-306 (PKVLITTSDR…LRSLQKGTFD (184 aa)). Residues 284 to 301 (VGIQELGPRFTLKLRSLQ) are RNA-binding.

Its subcellular location is the nucleus. It is found in the nucleolus. Its function is as follows. May be required for ribosome biogenesis. In Danio rerio (Zebrafish), this protein is Ribosome production factor 1 (rpf1).